We begin with the raw amino-acid sequence, 80 residues long: Trefoil factor 3 (80 aa).

The first 23 residues, 1–23, serve as a signal peptide directing secretion; sequence MEARVLWLLVVVLVLGSSSLAVA. In terms of domain architecture, P-type spans 30–73; the sequence is NLCEVPPKDRVDCGYPEITSEQCVNRGCCFDSSIHGVPWCFKPL. 3 disulfides stabilise this stretch: Cys32–Cys58, Cys42–Cys57, and Cys52–Cys69.

As to quaternary structure, monomer. Homodimer; disulfide-linked.

It localises to the secreted. The protein resides in the extracellular space. Its subcellular location is the extracellular matrix. The protein localises to the cytoplasm. Its function is as follows. Involved in the maintenance and repair of the intestinal mucosa. Promotes the mobility of epithelial cells in healing processes (motogen). The protein is Trefoil factor 3 (TFF3) of Canis lupus familiaris (Dog).